Here is a 286-residue protein sequence, read N- to C-terminus: Bifunctional protein FolD 2 (286 aa).

Residues 165-167 (GRG), Thr-192, and Ile-233 contribute to the NADP(+) site.

Belongs to the tetrahydrofolate dehydrogenase/cyclohydrolase family. Homodimer.

The catalysed reaction is (6R)-5,10-methylene-5,6,7,8-tetrahydrofolate + NADP(+) = (6R)-5,10-methenyltetrahydrofolate + NADPH. It catalyses the reaction (6R)-5,10-methenyltetrahydrofolate + H2O = (6R)-10-formyltetrahydrofolate + H(+). It participates in one-carbon metabolism; tetrahydrofolate interconversion. In terms of biological role, catalyzes the oxidation of 5,10-methylenetetrahydrofolate to 5,10-methenyltetrahydrofolate and then the hydrolysis of 5,10-methenyltetrahydrofolate to 10-formyltetrahydrofolate. This Salinispora tropica (strain ATCC BAA-916 / DSM 44818 / JCM 13857 / NBRC 105044 / CNB-440) protein is Bifunctional protein FolD 2.